Reading from the N-terminus, the 507-residue chain is Tryptamine 4-monooxygenase (507 aa).

Residues 1–19 form the signal peptide; sequence MIVLLVSLVLAGCIYYANA. The interval 403–425 is disordered; the sequence is PNPSEFRPERYLSSDGKPDPTVR. Positions 408–425 are enriched in basic and acidic residues; sequence FRPERYLSSDGKPDPTVR. Cys-439 provides a ligand contact to heme.

It belongs to the cytochrome P450 family. It depends on heme as a cofactor.

The enzyme catalyses tryptamine + AH2 + O2 = 4-hydroxytryptamine + A + H2O. It participates in secondary metabolite biosynthesis. In terms of biological role, tryptamine 4-monooxygenase; part of the gene cluster that mediates the biosynthesis of psilocybin, a psychotropic tryptamine-derived natural product. The first step in the pathway is the decarboxylation of L-tryptophan to tryptamine by the decarboxylase psiD. PsiD does not decarboxylate phenylalanine, tyrosine, or 5-hydroxy- L -tryptophan (5-HTP). 4-hydroxy-L-tryptophan is accepted as substrate by psiD as well. The cytochrome P450 monooxygenase psiH then converts tryptamine to 4-hydroxytryptamine. The kinase psiK catalyzes the 4-O-phosphorylation step by converting 4-hydroxytryptamine into norbaeocystin. The methyltransferase psiM then catalyzes iterative methyl transfer to the amino group of norbaeocystin to yield psilocybin via a monomethylated intermediate, baeocystin. The protein is Tryptamine 4-monooxygenase of Psilocybe cyanescens.